Reading from the N-terminus, the 705-residue chain is Effector protein hopD1 (705 aa).

Composition is skewed to polar residues over residues 1 to 11 and 28 to 41; these read MNPLRSIQHNI and QAQQ…SPSQ. Disordered stretches follow at residues 1–41 and 173–207; these read MNPL…SPSQ and SSSL…DSGS. The segment covering 173-184 has biased composition (low complexity); the sequence is SSSLETPLLSSP.

The protein resides in the secreted. Effector protein involved in non-host recognition. The chain is Effector protein hopD1 (hopD1) from Pseudomonas syringae pv. tomato (strain ATCC BAA-871 / DC3000).